The primary structure comprises 117 residues: Holo-[acyl-carrier-protein] synthase (117 aa).

2 residues coordinate Mg(2+): aspartate 6 and glutamate 55.

Belongs to the P-Pant transferase superfamily. AcpS family. Mg(2+) serves as cofactor.

Its subcellular location is the cytoplasm. The catalysed reaction is apo-[ACP] + CoA = holo-[ACP] + adenosine 3',5'-bisphosphate + H(+). In terms of biological role, transfers the 4'-phosphopantetheine moiety from coenzyme A to a Ser of acyl-carrier-protein. This is Holo-[acyl-carrier-protein] synthase from Chlorobaculum tepidum (strain ATCC 49652 / DSM 12025 / NBRC 103806 / TLS) (Chlorobium tepidum).